The following is a 207-amino-acid chain: Homeobox protein BarH-like 1 (207 aa).

Positions 95-154 (GRRSRTVFTELQLMGLEKRFEKQKYLSTPDRIDLAESLGLSQLQVKTWYQNRRMKWKKIV) form a DNA-binding region, homeobox. The segment at 157–207 (GGGLESPTKPKGRPKKNSIPSSEQLSEQERAKETEKPPESPGEPSERQQEE) is disordered. Basic and acidic residues predominate over residues 183 to 207 (EQERAKETEKPPESPGEPSERQQEE).

The protein belongs to the BAR homeobox family. Expressed predominantly in the facial primordia, developing stomach, and proximal limbs.

It localises to the nucleus. In terms of biological role, transcription factor, which is involved in craniofacial development, in odontogenic region definition, and in stomach organogenesis. Binds to a regulatory module of the NCAM promoter. The polypeptide is Homeobox protein BarH-like 1 (BARX1) (Gallus gallus (Chicken)).